The primary structure comprises 496 residues: Probable CtpA-like serine protease (496 aa).

Residues 1-26 (MRKCFFMSHNPEEKQSNLDSNHKNES) form a disordered region. Residues 10–25 (NPEEKQSNLDSNHKNE) are compositionally biased toward basic and acidic residues. A helical transmembrane segment spans residues 39 to 59 (FILLLLGVVIITAGITVAATI). The PDZ domain occupies 124–206 (TKSFNEDVSG…TTVKLTIKRG (83 aa)). Catalysis depends on charge relay system residues S329, D340, and K354.

Belongs to the peptidase S41A family.

It is found in the cell membrane. The chain is Probable CtpA-like serine protease from Staphylococcus haemolyticus (strain JCSC1435).